The sequence spans 999 residues: RING finger domain and kelch repeat-containing protein DDB_G0271372 (999 aa).

The segment at 7–49 adopts an RING-type zinc-finger fold; the sequence is CPNCLKVFNNPRQLECDHILCTRCIEGVYNPGRTPIIKCPVCD. The segment covering 92-143 has biased composition (low complexity); sequence STGSSNNNNNNNNNNNNNNNNFVINNSNNKNNGATTTTTTTTTTTNSNSNST. 2 disordered regions span residues 92-147 and 159-209; these read STGS…KSKV and ASPK…SSPP. Residues 165-196 show a composition bias toward polar residues; it reads GSSQGSLTTINNQKKLTLSPQRASSTTTTSVN. Residues 258–302 form a B box-type zinc finger; sequence AELSKCNDHDQKKFTIFCTDCDQLLCDECLNNNQQQHENHQLNKI. Residues cysteine 263, histidine 266, cysteine 286, and histidine 294 each coordinate Zn(2+). Positions 355–402 form a coiled coil; that stretch reads DIDTMIENLKERKNALISQIDKEYEEQKLELKDQIETINTTIVDIQNN. 2 stretches are compositionally biased toward low complexity: residues 485–516 and 526–536; these read GVSS…IITT and SPSPTSSSSST. Positions 485 to 637 are disordered; that stretch reads GVSSSPTGTG…TSTNGSNTKI (153 aa). Over residues 552–612 the composition is skewed to polar residues; the sequence is LSSQNYDNFG…SHGSKLNDNI (61 aa). Residues 613 to 635 show a composition bias toward low complexity; sequence NTNNNNSPSPTSSSTTSTNGSNT. Kelch repeat units lie at residues 655 to 700, 702 to 745, 748 to 793, 796 to 842, and 844 to 892; these read ITAR…YDNN, TIYR…VFDG, YIYL…YHPT, CIYV…FDGS, and YINI…SMNL. Positions 904–924 are enriched in low complexity; the sequence is NSFSSISSHSSLNSSSSNNGI. Positions 904–936 are disordered; the sequence is NSFSSISSHSSLNSSSSNNGISGSGGSGGDNEI.

In Dictyostelium discoideum (Social amoeba), this protein is RING finger domain and kelch repeat-containing protein DDB_G0271372.